Reading from the N-terminus, the 161-residue chain is Phosphopantetheine adenylyltransferase (161 aa).

Residue threonine 9 coordinates substrate. ATP is bound by residues 9-10 (TF) and histidine 17. 3 residues coordinate substrate: lysine 41, leucine 73, and arginine 87. Residues 88–90 (GLR), glutamate 98, and 123–129 (YSFISST) contribute to the ATP site.

This sequence belongs to the bacterial CoaD family. Homohexamer. Mg(2+) is required as a cofactor.

Its subcellular location is the cytoplasm. It catalyses the reaction (R)-4'-phosphopantetheine + ATP + H(+) = 3'-dephospho-CoA + diphosphate. It participates in cofactor biosynthesis; coenzyme A biosynthesis; CoA from (R)-pantothenate: step 4/5. Functionally, reversibly transfers an adenylyl group from ATP to 4'-phosphopantetheine, yielding dephospho-CoA (dPCoA) and pyrophosphate. The sequence is that of Phosphopantetheine adenylyltransferase from Pseudomonas putida (strain ATCC 47054 / DSM 6125 / CFBP 8728 / NCIMB 11950 / KT2440).